Here is a 215-residue protein sequence, read N- to C-terminus: Thymidylate kinase (215 aa).

An ATP-binding site is contributed by 13 to 20 (GLEGAGKS).

This sequence belongs to the thymidylate kinase family.

The catalysed reaction is dTMP + ATP = dTDP + ADP. In terms of biological role, phosphorylation of dTMP to form dTDP in both de novo and salvage pathways of dTTP synthesis. In Shewanella frigidimarina (strain NCIMB 400), this protein is Thymidylate kinase.